The chain runs to 81 residues: ATP synthase subunit c, chloroplastic (81 aa).

2 helical membrane-spanning segments follow: residues Pro-3–Gly-23 and Leu-57–Ala-77.

It belongs to the ATPase C chain family. In terms of assembly, F-type ATPases have 2 components, F(1) - the catalytic core - and F(0) - the membrane proton channel. F(1) has five subunits: alpha(3), beta(3), gamma(1), delta(1), epsilon(1). F(0) has four main subunits: a(1), b(1), b'(1) and c(10-14). The alpha and beta chains form an alternating ring which encloses part of the gamma chain. F(1) is attached to F(0) by a central stalk formed by the gamma and epsilon chains, while a peripheral stalk is formed by the delta, b and b' chains.

The protein localises to the plastid. It localises to the chloroplast thylakoid membrane. In terms of biological role, f(1)F(0) ATP synthase produces ATP from ADP in the presence of a proton or sodium gradient. F-type ATPases consist of two structural domains, F(1) containing the extramembraneous catalytic core and F(0) containing the membrane proton channel, linked together by a central stalk and a peripheral stalk. During catalysis, ATP synthesis in the catalytic domain of F(1) is coupled via a rotary mechanism of the central stalk subunits to proton translocation. Key component of the F(0) channel; it plays a direct role in translocation across the membrane. A homomeric c-ring of between 10-14 subunits forms the central stalk rotor element with the F(1) delta and epsilon subunits. The chain is ATP synthase subunit c, chloroplastic from Phaseolus vulgaris (Kidney bean).